The sequence spans 169 residues: MIIYKDIVSGDEMFSDAYKMKVLDDYFYELEGKITTEKGGIDESAIGGNASAEDAVEGLEESGTTGCNIVIAQRLQETQFTKAQYKVYIKDYSKKVLEYLTKNKPERVDGFKAASAAGMKRVMGNFKNWQFFTGEKMDQDGMVALMDYREDGKTPYMLFFKDGLEEEKF.

The region spanning 1–169 (MIIYKDIVSG…FKDGLEEEKF (169 aa)) is the TCTP domain.

It belongs to the TCTP family.

Its subcellular location is the cytoplasm. Its function is as follows. Involved in calcium binding and microtubule stabilization. This Branchiostoma belcheri (Amphioxus) protein is Translationally-controlled tumor protein homolog.